The sequence spans 81 residues: Styelin-E (81 aa).

An N-terminal signal peptide occupies residues 1-22 (MQMKATILIVLVALFMIQQSEA). The residue at position 24 (W24) is a 6'-bromotryptophan. Position 26 is a 3,4-dihydroxyarginine (R26). K27, K30, and K34 each carry 4,5-dihydroxylysine. Residues Y36 and Y37 each carry the 3',4'-dihydroxyphenylalanine modification. K38 bears the 4,5-dihydroxylysine mark. The residue at position 40 (K40) is a 5-hydroxylysine. A 3',4'-dihydroxyphenylalanine mark is found at Y41 and Y42. K44 is modified (5-hydroxylysine). L54 carries the leucine amide modification. The propeptide at 56–81 (DMTDEEFQDFMKEVEQAREEELQSRQ) is removed in mature form.

Contains L-DOPA (3',4'-dihydroxyphenylalanine). Hemocytes and pharyngeal tissues.

Its subcellular location is the secreted. Functionally, bactericidal against several Gram-positive and Gram-negative bacteria. The chain is Styelin-E from Styela clava (Sea squirt).